The sequence spans 130 residues: Protein ApaG (130 aa).

Residues 3–127 (SAVTQDIQIT…FSLDSPFVRR (125 aa)) form the ApaG domain.

This chain is Protein ApaG, found in Methylocella silvestris (strain DSM 15510 / CIP 108128 / LMG 27833 / NCIMB 13906 / BL2).